The chain runs to 655 residues: Alpha-amylase (655 aa).

The active-site Nucleophile is the glutamate 123. The Proton donor role is filled by aspartate 214.

Belongs to the glycosyl hydrolase 57 family.

It catalyses the reaction Endohydrolysis of (1-&gt;4)-alpha-D-glucosidic linkages in polysaccharides containing three or more (1-&gt;4)-alpha-linked D-glucose units.. This is Alpha-amylase (amyA) from Pyrococcus abyssi (strain GE5 / Orsay).